Reading from the N-terminus, the 154-residue chain is Putative pre-16S rRNA nuclease (154 aa).

This sequence belongs to the YqgF nuclease family.

Its subcellular location is the cytoplasm. In terms of biological role, could be a nuclease involved in processing of the 5'-end of pre-16S rRNA. The protein is Putative pre-16S rRNA nuclease of Rickettsia africae (strain ESF-5).